The following is an 887-amino-acid chain: Lon protease homolog 2, peroxisomal (887 aa).

The Lon N-terminal domain maps to 11–256 (LGILAFRNKV…KATELVDRHL (246 aa)). The interval 72–101 (YPGGGTDSGERNVKSQPGLSDSRKADGKSQ) is disordered. 409 to 416 (GPPGVGKT) is a binding site for ATP. The Lon proteolytic domain maps to 693–878 (VSNPGVSVGL…EVLEQAFEGG (186 aa)). Residues S784 and K827 contribute to the active site. The short motif at 885–887 (ARL) is the Microbody targeting signal element.

This sequence belongs to the peptidase S16 family.

It localises to the peroxisome matrix. It catalyses the reaction Hydrolysis of proteins in presence of ATP.. Functionally, ATP-dependent serine protease that mediates the selective degradation of misfolded and unassembled polypeptides in the peroxisomal matrix. Necessary for type 2 peroxisome targeting signal (PTS2)-containing protein processing and facilitates peroxisome matrix protein import. The chain is Lon protease homolog 2, peroxisomal from Spinacia oleracea (Spinach).